A 180-amino-acid polypeptide reads, in one-letter code: Large ribosomal subunit protein uL6 (180 aa).

It belongs to the universal ribosomal protein uL6 family. As to quaternary structure, part of the 50S ribosomal subunit.

This protein binds to the 23S rRNA, and is important in its secondary structure. It is located near the subunit interface in the base of the L7/L12 stalk, and near the tRNA binding site of the peptidyltransferase center. The sequence is that of Large ribosomal subunit protein uL6 from Caldanaerobacter subterraneus subsp. tengcongensis (strain DSM 15242 / JCM 11007 / NBRC 100824 / MB4) (Thermoanaerobacter tengcongensis).